The sequence spans 595 residues: Mitoguardin 1 (595 aa).

2 consecutive transmembrane segments (helical) span residues 11–31 (LPIK…YYSL) and 38–58 (TGTK…IIIA).

The protein belongs to the mitoguardin family. As to quaternary structure, homodimer and heterodimer; forms heterodimers with miga2.

It localises to the mitochondrion outer membrane. Its function is as follows. Regulator of mitochondrial fusion: acts by forming homo- and heterodimers at the mitochondrial outer membrane and facilitating the formation of pld6/MitoPLD dimers. May act by regulating phospholipid metabolism via pld6/MitoPLD. The protein is Mitoguardin 1 of Danio rerio (Zebrafish).